Consider the following 279-residue polypeptide: Peptide deformylase 1B, chloroplastic (279 aa).

Fe cation-binding residues include Cys-177 and His-219. Glu-220 is an active-site residue. Residue His-223 coordinates Fe cation.

This sequence belongs to the polypeptide deformylase family. Fe(2+) serves as cofactor.

The protein resides in the plastid. It is found in the chloroplast. The enzyme catalyses N-terminal N-formyl-L-methionyl-[peptide] + H2O = N-terminal L-methionyl-[peptide] + formate. In terms of biological role, removes the formyl group from the N-terminal Met of newly synthesized proteins. This chain is Peptide deformylase 1B, chloroplastic (PDF1B), found in Solanum lycopersicum (Tomato).